A 304-amino-acid chain; its full sequence is Coenzyme PQQ synthesis protein B (304 aa).

The protein belongs to the PqqB family.

It participates in cofactor biosynthesis; pyrroloquinoline quinone biosynthesis. Functionally, may be involved in the transport of PQQ or its precursor to the periplasm. The polypeptide is Coenzyme PQQ synthesis protein B (Pseudomonas paraeruginosa (strain DSM 24068 / PA7) (Pseudomonas aeruginosa (strain PA7))).